The sequence spans 232 residues: Large ribosomal subunit protein uL1 (232 aa).

This sequence belongs to the universal ribosomal protein uL1 family. As to quaternary structure, part of the 50S ribosomal subunit.

Functionally, binds directly to 23S rRNA. The L1 stalk is quite mobile in the ribosome, and is involved in E site tRNA release. In terms of biological role, protein L1 is also a translational repressor protein, it controls the translation of the L11 operon by binding to its mRNA. This Xylella fastidiosa (strain M23) protein is Large ribosomal subunit protein uL1.